We begin with the raw amino-acid sequence, 473 residues long: Methionine aminopeptidase 2 (473 aa).

The tract at residues Leu23–Pro121 is disordered. Positions Lys41–Asn53 are enriched in polar residues. Residues Asp73–Val83 show a composition bias toward acidic residues. Low complexity predominate over residues Ala84–Ala93. A compositionally biased stretch (basic residues) spans Lys97–Leu113. His224 is a binding site for substrate. Asp244, Asp255, and His326 together coordinate a divalent metal cation. His334 is a binding site for substrate. Residues Glu359 and Glu454 each coordinate a divalent metal cation.

The protein belongs to the peptidase M24A family. Methionine aminopeptidase eukaryotic type 2 subfamily. Co(2+) serves as cofactor. The cofactor is Zn(2+). Mn(2+) is required as a cofactor. Requires Fe(2+) as cofactor.

The protein resides in the cytoplasm. It carries out the reaction Release of N-terminal amino acids, preferentially methionine, from peptides and arylamides.. In terms of biological role, cotranslationally removes the N-terminal methionine from nascent proteins. The N-terminal methionine is often cleaved when the second residue in the primary sequence is small and uncharged (Met-Ala-, Cys, Gly, Pro, Ser, Thr, or Val). This is Methionine aminopeptidase 2 from Lodderomyces elongisporus (strain ATCC 11503 / CBS 2605 / JCM 1781 / NBRC 1676 / NRRL YB-4239) (Yeast).